A 7260-amino-acid chain; its full sequence is Nonribosomal peptide synthetase ecdA (7260 aa).

Positions 4–80 (TNEMERKRVF…ELFETIQYLQ (77 aa)) constitute a Carrier 1 domain. Ser-41 bears the O-(pantetheine 4'-phosphoryl)serine mark. A condensation 1 region spans residues 134 to 549 (EDVYPSTPLQ…SINEILTLPA (416 aa)). An adenylation 1 region spans residues 575–965 (QDQVRSQPAA…DGSLLYVGRC (391 aa)). In terms of domain architecture, Carrier 2 spans 1090–1166 (APSTAIEHKL…DLARELEGRN (77 aa)). Ser-1127 bears the O-(pantetheine 4'-phosphoryl)serine mark. Positions 1208–1628 (EDIIPCTAMQ…LGDLSLLSAD (421 aa)) are condensation 2. An adenylation 2 region spans residues 1653–2054 (EEQITARPDS…GRRDTQIKIR (402 aa)). The Carrier 3 domain occupies 2188-2264 (TPSTPTESQL…DLANLLSSRF (77 aa)). Residue Ser-2225 is modified to O-(pantetheine 4'-phosphoryl)serine. The condensation 3 stretch occupies residues 2314-2719 (QDVYPCTPLQ…THVVQQLCDP (406 aa)). The adenylation 3 stretch occupies residues 2763–3156 (KQALAQPNAP…GRRDTQVKIR (394 aa)). The Carrier 4 domain occupies 3287-3365 (QPATEMEKML…ELAQVLEERV (79 aa)). Ser-3324 carries the post-translational modification O-(pantetheine 4'-phosphoryl)serine. Positions 3417–3831 (VQDVYPCTPL…LLSPNDQQQI (415 aa)) are condensation 4. The tract at residues 3851-4248 (EEQAMAHPTK…SFVYVARRNT (398 aa)) is adenylation 4. One can recognise a Carrier 5 domain in the interval 4394 to 4471 (APATAMERTL…DLANLLADGA (78 aa)). Residue Ser-4431 is modified to O-(pantetheine 4'-phosphoryl)serine. The segment at 4510-4910 (EDIYPATPLQ…HFVHVAEQLF (401 aa)) is condensation 5. Residues 4955 to 5357 (ERAALQPNAP…GRRDLQVKIR (403 aa)) form an adenylation 5 region. Residues 5496–5573 (APRTVMEQQV…DLALVLSERG (78 aa)) form the Carrier 6 domain. At Ser-5533 the chain carries O-(pantetheine 4'-phosphoryl)serine. The interval 5622–6043 (EDVYPCTPLQ…AVSEKDERQI (422 aa)) is condensation 6. Residues 6063 to 6460 (QEQVARTPGE…GRHDSQVKIR (398 aa)) are adenylation 6. The Carrier 7 domain maps to 6592-6668 (APSTAMERQL…EVAQVVEDRV (77 aa)). Ser-6629 bears the O-(pantetheine 4'-phosphoryl)serine mark. The interval 6718–7133 (LPTTDFQALT…ILDSPGLLVS (416 aa)) is condensation 7. The tract at residues 7241 to 7260 (CEEAEKSASVTSSERRLATI) is disordered.

It belongs to the NRP synthetase family.

It participates in antifungal biosynthesis. In terms of biological role, nonribosomal peptide synthetase; part of the gene cluster that mediates the biosynthesis of echinocandin B, a fungal lipidated cyclic hexapeptide that acts as an antifungal agent. Linoleoyl-AMP, produced by the fatty-acyl-AMP ligase ecdI, is transferred to the initiation carrier domain (T0) of ecdA. The linoleoyl-S-phosphopantetheinyl-T0 is sequentially extended with L-ornithine, L-threonine, L-proline, L-homotyrosine, L-threonine, and 4R-methyl-L-proline to form the linear hexapeptide. Thereafter, the terminal condensation (C7) performs macrocyclization of the NRPS product and the cyclic scaffold is released from ecdA. All six of the amino acid residues are hydroxylated, including 4R,5R-dihydroxy-L-ornithine, 4R-hydroxyl-L-proline, 3S,4S-dihydroxy-L-homotyrosine, and 3S-hydroxyl-4S-methyl-L-prolin. In the pathway, all the hydroxylation reactions are proposed to occur following completion of the cyclic peptide, so the unhydroxylated precursor produced by ecdA will undergo six rounds of hydroxylation. Five hydroxylase genes (ecdG, ecdH, ecdK, htyE and htyF) are embedded within the echinocandin B (ecd) and L-homotyrosine (hty) clusters. The sequence is that of Nonribosomal peptide synthetase ecdA from Aspergillus rugulosus (Emericella rugulosa).